Consider the following 98-residue polypeptide: Glutaredoxin 1 (98 aa).

One can recognise a Glutaredoxin domain in the interval 1-98 (MNKAILHAII…KLLEGQPKKD (98 aa)). Cysteines 17 and 20 form a disulfide.

This sequence belongs to the glutaredoxin family. As to quaternary structure, monomer.

The protein resides in the cytoplasm. Has a glutathione-disulfide oxidoreductase activity in the presence of NADPH and glutathione reductase. Reduces low molecular weight disulfides and proteins. This chain is Glutaredoxin 1 (grxC1), found in Rickettsia bellii (strain RML369-C).